A 475-amino-acid chain; its full sequence is WASH complex subunit 1 (475 aa).

Residues Met-1–Arg-54 form a required for WASH complex assembly region. The WHD1 stretch occupies residues Met-1–Ile-167. A Glycyl lysine isopeptide (Lys-Gly) (interchain with G-Cter in ubiquitin) cross-link involves residue Lys-219. The interval Glu-296–Ser-475 is disordered. A compositionally biased stretch (pro residues) spans Ala-302–Pro-318. Positions Gln-357–Ser-475 are VCA. In terms of domain architecture, WH2 spans Gly-369–Val-391. A compositionally biased stretch (basic and acidic residues) spans Ser-390–Gln-406. The span at Ser-432 to Gly-446 shows a compositional bias: gly residues. The segment covering Gly-466–Ser-475 has biased composition (acidic residues).

The protein belongs to the WASH1 family. As to quaternary structure, component of the WASH core complex also described as WASH regulatory complex SHRC composed of WASHC1, WASHC2, WASHC3, WASHC4 and WASHC5. The WASH core complex associates with the F-actin-capping protein dimer (formed by CAPZA1, CAPZA2 or CAPZA3 and CAPZB) in a transient or substoichiometric manner which was initially described as WASH complex. Interacts (via WHD1 region) with WASHC2; the interaction is direct. Interacts with BECN1; WASHC1 and AMBRA1 can competitively interact with BECN1. Interacts with BLOC1S2; may associate with the BLOC-1 complex. Interacts with tubulin gamma chain (TUBG1 or TUBG2). Interacts with TBC1D23. Ubiquitinated at Lys-219 via 'Lys-63'-linked ubiquitin chains by the TRIM27:MAGEL2 E3 ubiquitin ligase complex, leading to promote endosomal F-actin assembly.

The protein resides in the early endosome membrane. The protein localises to the recycling endosome membrane. Its function is as follows. Acts as a component of the WASH core complex that functions as a nucleation-promoting factor (NPF) at the surface of endosomes, where it recruits and activates the Arp2/3 complex to induce actin polymerization, playing a key role in the fission of tubules that serve as transport intermediates during endosome sorting. Regulates the trafficking of endosomal alpha5beta1 integrin to the plasma membrane and involved in invasive cell migration. In T-cells involved in endosome-to-membrane recycling of receptors including T-cell receptor (TCR), CD28 and ITGAL; proposed to be implicated in T-cell proliferation and effector function. In dendritic cells involved in endosome-to-membrane recycling of major histocompatibility complex (MHC) class II probably involving retromer and subsequently allowing antigen sampling, loading and presentation during T-cell activation. Involved in cytokinesis and following polar body extrusion during oocyte meiotic maturation. Involved in Arp2/3 complex-dependent actin assembly driving Salmonella typhimurium invasion independent of ruffling. Involved in the exocytosis of MMP14 leading to matrix remodeling during invasive migration and implicating late endosome-to-plasma membrane tubular connections and cooperation with the exocyst complex. Involved in negative regulation of autophagy independently from its role in endosomal sorting by inhibiting BECN1 ubiquitination to inactivate PIK3C3/Vps34 activity. The chain is WASH complex subunit 1 from Rattus norvegicus (Rat).